The chain runs to 349 residues: MAWIDPEVTKKPKKPMFLCVLSNTKTAHIPKLSAAGKTAELTDYTPAGDAELIETGNIISVPVLPMTPPYDTPTPAIMTRSALKLTEAPYHFINSGLIVTPEVPCIDLKAKPGEDIREPIAVRDVQGIYERAKFLAKRLRSQIDHVVIGESIPGGTTTAMGVLNALGYNGNVSSSADENPLELKKQVVEEGMKASGLTFGSLKDEPMKAIACMGDPMMPAVIGLVAGFQGTEVDVVLAGGTQMAAVYAIIKHLGFNTEKLAIATTRYVVEDKSAHFVELTKTLEVPVVYIADPGFGKSSLKGLHRYETGTIKEGAGAGGAMYLAGLFGVTQDEFRSEVENVCKLLKAGQ.

This sequence belongs to the UPF0284 family.

This chain is UPF0284 protein MA_3887, found in Methanosarcina acetivorans (strain ATCC 35395 / DSM 2834 / JCM 12185 / C2A).